Reading from the N-terminus, the 264-residue chain is Neuferricin (264 aa).

Residues 1 to 22 (MLRCGGRGLLLGLAVAAAAVMA) form the signal peptide. A Cytochrome b5 heme-binding domain is found at 35–134 (FRLFIPEELS…KNYVCVGRVT (100 aa)).

It belongs to the cytochrome b5 family. MAPR subfamily.

It localises to the secreted. In terms of biological role, heme-binding protein which promotes neuronal but not astrocyte differentiation. This is Neuferricin from Homo sapiens (Human).